Consider the following 304-residue polypeptide: MIRQRTLKNVIRATGVGLHTGEKVYMTVRPAPVDTGIVFRRVDLDPVVEIKAAADAVGETTLSSTLVQDGVKVGTVEHFLSAMAGLGIDNAFVELSAPEMPIMDGSAGPFVFLLQSAGIKEQEAAKKFIRIKKEVTVREDDKTATFVPFDGFKVTFSIEFDHPVFEERNQLASIDFSTTSFVKEVARARTFGFMRDIEFLRSQNLALGGSVDNAIVVDEYRILNEDGLRYDDEFVKHKMLDAIGDLYLLGHSLIGEFIGHKSGHALNNALLREILRQEDSYEVVTFEDATDAPVSYMRPVLAAE.

Zn(2+) contacts are provided by His78, His237, and Asp241. The active-site Proton donor is the His264.

This sequence belongs to the LpxC family. Zn(2+) is required as a cofactor.

The catalysed reaction is a UDP-3-O-[(3R)-3-hydroxyacyl]-N-acetyl-alpha-D-glucosamine + H2O = a UDP-3-O-[(3R)-3-hydroxyacyl]-alpha-D-glucosamine + acetate. The protein operates within glycolipid biosynthesis; lipid IV(A) biosynthesis; lipid IV(A) from (3R)-3-hydroxytetradecanoyl-[acyl-carrier-protein] and UDP-N-acetyl-alpha-D-glucosamine: step 2/6. Functionally, catalyzes the hydrolysis of UDP-3-O-myristoyl-N-acetylglucosamine to form UDP-3-O-myristoylglucosamine and acetate, the committed step in lipid A biosynthesis. The chain is UDP-3-O-acyl-N-acetylglucosamine deacetylase from Alcanivorax borkumensis (strain ATCC 700651 / DSM 11573 / NCIMB 13689 / SK2).